The chain runs to 257 residues: 4-hydroxy-tetrahydrodipicolinate reductase (257 aa).

7-12 lines the NAD(+) pocket; sequence GCLGRM. R34 serves as a coordination point for NADP(+). NAD(+) is bound by residues 96–98 and 117–120; these read GTT and SCNM. H149 functions as the Proton donor/acceptor in the catalytic mechanism. Position 150 (H150) interacts with (S)-2,3,4,5-tetrahydrodipicolinate. The active-site Proton donor is the K153. 159–160 is a (S)-2,3,4,5-tetrahydrodipicolinate binding site; sequence GT.

This sequence belongs to the DapB family.

The protein resides in the cytoplasm. It carries out the reaction (S)-2,3,4,5-tetrahydrodipicolinate + NAD(+) + H2O = (2S,4S)-4-hydroxy-2,3,4,5-tetrahydrodipicolinate + NADH + H(+). The enzyme catalyses (S)-2,3,4,5-tetrahydrodipicolinate + NADP(+) + H2O = (2S,4S)-4-hydroxy-2,3,4,5-tetrahydrodipicolinate + NADPH + H(+). Its pathway is amino-acid biosynthesis; L-lysine biosynthesis via DAP pathway; (S)-tetrahydrodipicolinate from L-aspartate: step 4/4. Functionally, catalyzes the conversion of 4-hydroxy-tetrahydrodipicolinate (HTPA) to tetrahydrodipicolinate. The protein is 4-hydroxy-tetrahydrodipicolinate reductase of Anaplasma marginale (strain St. Maries).